Consider the following 837-residue polypeptide: MFSINARTKVPIWVPFIARKGFSMSTRQLAEPKLNQVSSLNTRNIGIIAHIDAGKTTTTERMLFYSGKTTTMGDVDQGDTVTDYLPSERSRGITIQSAAITIPWNNNKINIIDTPGHADFTFEVIRSLRVLDGCVTILDAVAGVEAQTEKVWKQAQALKIPRIAFVNKMDRPGAGFSRTVKEVVQKLQTKVVLCNIPYFEMSKDDAVFVGVIDILHNKILKWNIDEDPNGRDITVIDLQEAKESHQEAYMEALKCRESMVETLGGIEETVVDAFLECDEDYMKIPSSILKSAIRKACISNQVTPVFCGSAFRKIAVQPLLDGVVDYLPSPLQTPVPEITASTSKVSKKQKQKKNSKVSSVPIEMNPKKGLIVNKNPQLTVALAFKVMTHATRGVMTFFRVYSGSLTSNTTVVNTRTGKKLHLNKVLLMHGDTPEPVSQISSGNIGVITGTENDVITGDTLVSHGPVKRNFTDLETSIKLLPIEIPPPLFNSSIEPLTAGDARYMNECINTLIREDPSLNVNVDEELGQTILSGMGELHLEIVRDRLINDMKAKIRLRNVAVSFKETVSKPSLEVVKASKNDGLVKVEVSLEAIDGPAEESTHADENGSVLLETDNNVVKLPPEAAASHINESLSERRWKSEHSLEELNDIILQGITTGLQLGGPILGLPLHSVVVRVIHWDFPVEGKEVSASMLLDASRQVVREALSKLPESSFCILEPIMSTRVYVDSGSMGEVVHDLSHRCSAHITSIEDESENMDSNAWANEEAENLYLPQDYTMKSGKNAVNFTNKKVVVAETPLRDMVGYLSKLRSITQGRGVFDMTYLGMRRAIRPVLLDS.

Residues Met-1–Leu-29 constitute a mitochondrion transit peptide. The 292-residue stretch at Leu-40 to Leu-331 folds into the tr-type G domain. GTP-binding positions include Ala-49–Thr-56, Asp-113–His-117, and Asn-167–Asp-170. Residues Ile-338–Ser-359 form a disordered region. A compositionally biased stretch (basic residues) spans Val-345–Ser-355.

The protein belongs to the TRAFAC class translation factor GTPase superfamily. Classic translation factor GTPase family. EF-G/EF-2 subfamily.

The protein localises to the mitochondrion. In terms of biological role, mitochondrial GTPase that mediates the disassembly of ribosomes from messenger RNA at the termination of mitochondrial protein biosynthesis. Not involved in the GTP-dependent ribosomal translocation step during translation elongation. In Meyerozyma guilliermondii (strain ATCC 6260 / CBS 566 / DSM 6381 / JCM 1539 / NBRC 10279 / NRRL Y-324) (Yeast), this protein is Ribosome-releasing factor 2, mitochondrial.